A 472-amino-acid chain; its full sequence is Protein c-ets-2-B (472 aa).

The PNT domain occupies 85 to 170 (DTFNGFAKER…EHLEEMMKEY (86 aa)). Positions 366–446 (IQLWQFLLEL…SGKRYVYRFV (81 aa)) form a DNA-binding region, ETS.

This sequence belongs to the ETS family.

The protein localises to the nucleus. Its function is as follows. Probable transcription factor. The chain is Protein c-ets-2-B (ets2-b) from Xenopus laevis (African clawed frog).